The chain runs to 617 residues: MGPIDTSQRLARLRELMQERKVDVYIVPSEDSHQSEYIAHCDGRREFISGFTGSAGCAIVSMTKAALSTDGRYFNQAAKQLDNNWILLKRGFENMPTWQEWTAEQAEGGKVVGVDPSLITASDARNLSETIKKCGGSLLGVQENLVDLVWGTERPARPSEKVALHPIEFAGKSFEEKISDLRKELQKKKSAGFVISMLDEIAWLFNLRGNDIPYNPVFFAYAIITQSTADLYIDEEKLPAEVKNYLGDKVSLKPYSSIFEDAKVLGQSAQNKSDGEASAKPPQKFLISTRASWSLSLALGGEKNVEEVRSPITDAKAIKNEAELEGMRACHIRDGAALSEYFAWLENELVNKKTVLNEVDASDKLEQIRSKHQHFVGLSFDTISSTGPNAAVIHYKAERNNCSIIDPKAVYLCDSGAQYLDGTTDTTRTLHFGEPTEMEKKAYTLVLKGLISIDTAVFPKGTTGFALDAFARQYLWKEGLDYLHGTGHGVGSYLNVHEGPIGLGTRVQYSEVAIAPGNVISDEPGYYEDGVFGIRIENIIMAKEVKTTHKFGEKPWLGFEHVTMTPLCQKLINPSLLSDAEKKWVNDYHTEIWEKTSKYFENDELTRNWLKRETQPI.

The Mn(2+) site is built by Asp-414, Asp-425, Glu-523, and Glu-537.

It belongs to the peptidase M24B family. Requires Mn(2+) as cofactor.

The catalysed reaction is Release of any N-terminal amino acid, including proline, that is linked to proline, even from a dipeptide or tripeptide.. Its function is as follows. Catalyzes the removal of a penultimate prolyl residue from the N-termini of peptides. This is Probable Xaa-Pro aminopeptidase P (AMPP) from Ajellomyces capsulatus (strain G186AR / H82 / ATCC MYA-2454 / RMSCC 2432) (Darling's disease fungus).